A 403-amino-acid chain; its full sequence is D-alanyl-D-alanine carboxypeptidase DacA (403 aa).

The first 29 residues, 1 to 29 (MNTIFSARIMKRLALTTALCTAFISAAHA), serve as a signal peptide directing secretion. Catalysis depends on Ser73, which acts as the Acyl-ester intermediate. Lys76 serves as the catalytic Proton acceptor. Residue Ser139 is part of the active site. Lys242 provides a ligand contact to substrate.

The protein belongs to the peptidase S11 family.

It is found in the cell inner membrane. The enzyme catalyses Preferential cleavage: (Ac)2-L-Lys-D-Ala-|-D-Ala. Also transpeptidation of peptidyl-alanyl moieties that are N-acyl substituents of D-alanine.. Its pathway is cell wall biogenesis; peptidoglycan biosynthesis. Removes C-terminal D-alanyl residues from sugar-peptide cell wall precursors. The protein is D-alanyl-D-alanine carboxypeptidase DacA (dacA) of Escherichia coli O157:H7.